Consider the following 614-residue polypeptide: Zinc metalloproteinase dpy-31 (614 aa).

An N-terminal signal peptide occupies residues 1-24 (MSLLRCTTLLLVVVAIALPPCILG). The propeptide occupies 25–150 (YSLHDGSRLD…KTGQRRVKRK (126 aa)). The Peptidase M12A domain maps to 150-349 (KFIGSDLRRW…IRLMNKIYCS (200 aa)). The N-linked (GlcNAc...) asparagine glycan is linked to Asn190. 5 cysteine pairs are disulfide-bonded: Cys193–Cys348, Cys216–Cys237, Cys352–Cys372, Cys374–Cys383, and Cys394–Cys422. A Zn(2+)-binding site is contributed by His245. Residue Glu246 is part of the active site. His249 and His255 together coordinate Zn(2+). An EGF-like domain is found at 344-384 (NKIYCSNVCSRKLPCQRGGYTDPRRCDRCRCPDGFTGQFCE). The 117-residue stretch at 394 to 510 (CGGRIQVNGG…RGFEARARAL (117 aa)) folds into the CUB domain. The N-linked (GlcNAc...) asparagine glycan is linked to Asn461. Positions 513–562 (NGQWASWSPWTPCTASCGACGSRMRTRVCSHGACAGEPVENQVCNTHPCN) constitute a TSP type-1 domain. 3 cysteine pairs are disulfide-bonded: Cys525–Cys556, Cys529–Cys561, and Cys541–Cys546.

Zn(2+) serves as cofactor.

The protein resides in the secreted. With respect to regulation, inhibited by marimastat and tripeptide hydroxamic acids. Inhibited by 1,10-phenanthroline. Its function is as follows. Metalloprotease which cleaves the carboxyl terminus of procollagens to mature collagens. Probably involved in cuticular collagen maturation. This is Zinc metalloproteinase dpy-31 from Teladorsagia circumcincta (Brown stomach worm).